The following is a 335-amino-acid chain: Methionine import ATP-binding protein MetN (335 aa).

Positions 2–241 constitute an ABC transporter domain; sequence IQFQRLHKSY…PKHATTRRFV (240 aa). An ATP-binding site is contributed by 38-45; that stretch reads GHSGAGKS.

Belongs to the ABC transporter superfamily. Methionine importer (TC 3.A.1.24) family. As to quaternary structure, the complex is composed of two ATP-binding proteins (MetN), two transmembrane proteins (MetI) and a solute-binding protein (MetQ).

The protein localises to the cell inner membrane. The catalysed reaction is L-methionine(out) + ATP + H2O = L-methionine(in) + ADP + phosphate + H(+). It catalyses the reaction D-methionine(out) + ATP + H2O = D-methionine(in) + ADP + phosphate + H(+). Functionally, part of the ABC transporter complex MetNIQ involved in methionine import. Responsible for energy coupling to the transport system. This chain is Methionine import ATP-binding protein MetN, found in Xanthomonas axonopodis pv. citri (strain 306).